The following is a 614-amino-acid chain: Zinc metalloproteinase-disintegrin-like BmMP (614 aa).

A signal peptide spans 1-20 (MIQALLVTICLAVFPYQGSS). Positions 21–188 (IILESGNVND…WESDEPIRNA (168 aa)) are excised as a propeptide. Asn-187 carries N-linked (GlcNAc...) asparagine glycosylation. The Peptidase M12B domain maps to 205–401 (KYIEFYVAVD…DRPQCILNKP (197 aa)). 17 disulfide bridges follow: Cys-316–Cys-396, Cys-356–Cys-380, Cys-359–Cys-364, Cys-412–Cys-441, Cys-423–Cys-436, Cys-425–Cys-431, Cys-435–Cys-458, Cys-449–Cys-455, Cys-454–Cys-480, Cys-467–Cys-487, Cys-474–Cys-506, Cys-499–Cys-511, Cys-518–Cys-568, Cys-533–Cys-576, Cys-546–Cys-556, Cys-563–Cys-602, and Cys-596–Cys-607. Residue His-341 coordinates Zn(2+). Residue Glu-342 is part of the active site. Residues His-345 and His-351 each coordinate Zn(2+). Positions 409 to 495 (PAICGNYFVE…ECPTDIFRRN (87 aa)) constitute a Disintegrin domain. The short motif at 473-475 (DCD) is the D/ECD-tripeptide element.

Belongs to the venom metalloproteinase (M12B) family. P-III subfamily. P-IIIa sub-subfamily. In terms of assembly, monomer. Zn(2+) is required as a cofactor. As to expression, expressed by the venom gland.

Its subcellular location is the secreted. Its function is as follows. Snake venom zinc metalloproteinase that inhibits platelet aggregation and degrades fibrinogen. This chain is Zinc metalloproteinase-disintegrin-like BmMP, found in Bungarus multicinctus (Many-banded krait).